Reading from the N-terminus, the 446-residue chain is Chromosomal replication initiator protein DnaA (446 aa).

The tract at residues 1-81 (MENIADLWNS…AKLNIRFIIP (81 aa)) is domain I, interacts with DnaA modulators. The segment at 81 to 109 (PQSQTEEEVDYPPAKAKKMNDESNHLPQS) is domain II. Positions 110 to 326 (MLNPKYTFDT…GALIRVVAYS (217 aa)) are domain III, AAA+ region. ATP contacts are provided by Gly-154, Gly-156, Lys-157, and Thr-158. The tract at residues 327–446 (SLINKDINAD…QIEEINDILK (120 aa)) is domain IV, binds dsDNA.

It belongs to the DnaA family. Oligomerizes as a right-handed, spiral filament on DNA at oriC.

It is found in the cytoplasm. In terms of biological role, plays an essential role in the initiation and regulation of chromosomal replication. ATP-DnaA binds to the origin of replication (oriC) to initiate formation of the DNA replication initiation complex once per cell cycle. Binds the DnaA box (a 9 base pair repeat at the origin) and separates the double-stranded (ds)DNA. Forms a right-handed helical filament on oriC DNA; dsDNA binds to the exterior of the filament while single-stranded (ss)DNA is stabiized in the filament's interior. The ATP-DnaA-oriC complex binds and stabilizes one strand of the AT-rich DNA unwinding element (DUE), permitting loading of DNA polymerase. After initiation quickly degrades to an ADP-DnaA complex that is not apt for DNA replication. Binds acidic phospholipids. This chain is Chromosomal replication initiator protein DnaA, found in Bacillus cytotoxicus (strain DSM 22905 / CIP 110041 / 391-98 / NVH 391-98).